The sequence spans 261 residues: Phosphatidylglycerol--prolipoprotein diacylglyceryl transferase (261 aa).

Transmembrane regions (helical) follow at residues 20–40 (LAIH…VWLA), 54–74 (IIDF…LYYV), and 88–108 (IIAI…GAIV). Residue Arg139 participates in a 1,2-diacyl-sn-glycero-3-phospho-(1'-sn-glycerol) binding. A run of 2 helical transmembrane segments spans residues 175-195 (MPTF…VMVF) and 235-255 (ARVS…LFVY).

The protein belongs to the Lgt family.

The protein localises to the cell membrane. It catalyses the reaction L-cysteinyl-[prolipoprotein] + a 1,2-diacyl-sn-glycero-3-phospho-(1'-sn-glycerol) = an S-1,2-diacyl-sn-glyceryl-L-cysteinyl-[prolipoprotein] + sn-glycerol 1-phosphate + H(+). Its pathway is protein modification; lipoprotein biosynthesis (diacylglyceryl transfer). Its function is as follows. Catalyzes the transfer of the diacylglyceryl group from phosphatidylglycerol to the sulfhydryl group of the N-terminal cysteine of a prolipoprotein, the first step in the formation of mature lipoproteins. The polypeptide is Phosphatidylglycerol--prolipoprotein diacylglyceryl transferase (Lactococcus lactis subsp. cremoris (strain MG1363)).